Here is a 413-residue protein sequence, read N- to C-terminus: CCA-adding enzyme (413 aa).

S42 and K45 together coordinate ATP. CTP-binding residues include S42 and K45. 3 residues coordinate Mg(2+): D54, D56, and D107. The ATP site is built by H130, K150, and Y159. CTP contacts are provided by H130, K150, and Y159.

It belongs to the tRNA nucleotidyltransferase/poly(A) polymerase family. Archaeal CCA-adding enzyme subfamily. In terms of assembly, homodimer. The cofactor is Mg(2+).

It carries out the reaction a tRNA precursor + 2 CTP + ATP = a tRNA with a 3' CCA end + 3 diphosphate. The catalysed reaction is a tRNA with a 3' CCA end + 2 CTP + ATP = a tRNA with a 3' CCACCA end + 3 diphosphate. Catalyzes the addition and repair of the essential 3'-terminal CCA sequence in tRNAs without using a nucleic acid template. Adds these three nucleotides in the order of C, C, and A to the tRNA nucleotide-73, using CTP and ATP as substrates and producing inorganic pyrophosphate. tRNA 3'-terminal CCA addition is required both for tRNA processing and repair. Also involved in tRNA surveillance by mediating tandem CCA addition to generate a CCACCA at the 3' terminus of unstable tRNAs. While stable tRNAs receive only 3'-terminal CCA, unstable tRNAs are marked with CCACCA and rapidly degraded. In Sulfurisphaera tokodaii (strain DSM 16993 / JCM 10545 / NBRC 100140 / 7) (Sulfolobus tokodaii), this protein is CCA-adding enzyme.